The sequence spans 155 residues: Ribosomal RNA large subunit methyltransferase H (155 aa).

Residues leucine 72, glycine 103, and 122–127 (LSPLTL) each bind S-adenosyl-L-methionine.

Belongs to the RNA methyltransferase RlmH family. In terms of assembly, homodimer.

The protein localises to the cytoplasm. It carries out the reaction pseudouridine(1915) in 23S rRNA + S-adenosyl-L-methionine = N(3)-methylpseudouridine(1915) in 23S rRNA + S-adenosyl-L-homocysteine + H(+). Its function is as follows. Specifically methylates the pseudouridine at position 1915 (m3Psi1915) in 23S rRNA. The polypeptide is Ribosomal RNA large subunit methyltransferase H (Aeromonas salmonicida (strain A449)).